The chain runs to 403 residues: Phosphopentomutase (403 aa).

Residues Asp-13, Asp-298, His-303, Asp-339, His-340, and His-351 each contribute to the Mn(2+) site.

The protein belongs to the phosphopentomutase family. It depends on Mn(2+) as a cofactor.

Its subcellular location is the cytoplasm. It carries out the reaction 2-deoxy-alpha-D-ribose 1-phosphate = 2-deoxy-D-ribose 5-phosphate. The enzyme catalyses alpha-D-ribose 1-phosphate = D-ribose 5-phosphate. It functions in the pathway carbohydrate degradation; 2-deoxy-D-ribose 1-phosphate degradation; D-glyceraldehyde 3-phosphate and acetaldehyde from 2-deoxy-alpha-D-ribose 1-phosphate: step 1/2. Its function is as follows. Isomerase that catalyzes the conversion of deoxy-ribose 1-phosphate (dRib-1-P) and ribose 1-phosphate (Rib-1-P) to deoxy-ribose 5-phosphate (dRib-5-P) and ribose 5-phosphate (Rib-5-P), respectively. This chain is Phosphopentomutase, found in Streptococcus equi subsp. zooepidemicus (strain H70).